Reading from the N-terminus, the 367-residue chain is METRIRAAQLKGRGGAFPKLGRRAGPAEPDYESEVYEAAAGDAVAVAPAPAAAVEPAELDFGAGEGHHLQHISDREMPEDLALESNPSDHPRASTIFLSKSQTDVREKRKSNHLNHVSPGQLTKKYSSCSTIFLDDSTVSQPNLRTTIKCVTLAIYYHIKNRDANRSLDIFDERSHPLTREKVPEEYFKHDPEHKFIYRFVRTLFSAAQLTAECAIVTLVYLERLLTYAEIDICPTNWKRIVLGAILLASKVWDDQAVWNVDYCQILKDITVEDMNEMERHFLELLQFNINVPASVYAKYYFDLRSLADDNNLNFLFAPLSKERAQNLEAISRLCEDKYKDLCRAAMRRSLSADNFIGIQRSNAILS.

Residues serine 73, serine 111, and serine 118 each carry the phosphoserine modification. Residues 186-291 form the Cyclin N-terminal domain; the sequence is EYFKHDPEHK…FLELLQFNIN (106 aa). A Phosphoserine modification is found at serine 352.

Belongs to the cyclin family. Cyclin Y subfamily. Interacts with CDK16; this interaction mutually increases the stability of CDK16 and CCNYL1 and increases the kinase activity of CDK16. As to expression, highly expressed in the testis. Largely restricted to germ cells in the testis.

The protein resides in the cell membrane. Its function is as follows. Key regulator of Wnt signaling implicated in various biological processes including male fertility, embryonic neurogenesis and cortex development. Activates the cyclin-dependent kinase CDK16, and promotes sperm maturation. The chain is Cyclin-Y-like protein 1 from Mus musculus (Mouse).